The primary structure comprises 755 residues: Tryptophan 2-monooxygenase (755 aa).

FMN-binding residues include Ser-247, Glu-267, Lys-275, and Arg-295. Substrate is bound at residue Arg-295.

The protein belongs to the tryptophan 2-monooxygenase family. FMN is required as a cofactor.

The catalysed reaction is L-tryptophan + O2 = indole-3-acetamide + CO2 + H2O. The protein operates within plant hormone metabolism; auxin biosynthesis. The sequence is that of Tryptophan 2-monooxygenase (tms1) from Agrobacterium tumefaciens (strain Ach5).